The sequence spans 189 residues: Ribosome maturation factor RimM (189 aa).

A PRC barrel domain is found at 118-189; that stretch reads SGEYYWDDLI…IILVDWDENF (72 aa).

It belongs to the RimM family. Binds ribosomal protein uS19.

It localises to the cytoplasm. Its function is as follows. An accessory protein needed during the final step in the assembly of 30S ribosomal subunit, possibly for assembly of the head region. Essential for efficient processing of 16S rRNA. May be needed both before and after RbfA during the maturation of 16S rRNA. It has affinity for free ribosomal 30S subunits but not for 70S ribosomes. This is Ribosome maturation factor RimM from Ruthia magnifica subsp. Calyptogena magnifica.